The sequence spans 287 residues: Elongation factor Ts (287 aa).

The tract at residues 79–82 is involved in Mg(2+) ion dislocation from EF-Tu; sequence TDFV.

The protein belongs to the EF-Ts family.

It is found in the cytoplasm. In terms of biological role, associates with the EF-Tu.GDP complex and induces the exchange of GDP to GTP. It remains bound to the aminoacyl-tRNA.EF-Tu.GTP complex up to the GTP hydrolysis stage on the ribosome. In Anaplasma phagocytophilum (strain HZ), this protein is Elongation factor Ts.